Reading from the N-terminus, the 207-residue chain is MAKYLGPKLKLSRREGTDLFLKSGIRAIDSKCKLDQPPGQHNMRKSRFSDYGIQLREKQKVRRIYGILERQFSNYYKRAARIKGNTGENLLKLLESRLDNTVYRMGFGATRAEARQLVSHKSIMVENRIVNIASYQVVPNTVIKIHKKSHKQSRIRASLELSEQQREKLAWIEVDPIKLQGLFKRYPERSELSANIDEHLIIELYSK.

The S4 RNA-binding domain maps to 96-156 (SRLDNTVYRM…KKSHKQSRIR (61 aa)).

It belongs to the universal ribosomal protein uS4 family. Part of the 30S ribosomal subunit. Contacts protein S5. The interaction surface between S4 and S5 is involved in control of translational fidelity.

One of the primary rRNA binding proteins, it binds directly to 16S rRNA where it nucleates assembly of the body of the 30S subunit. Its function is as follows. With S5 and S12 plays an important role in translational accuracy. The chain is Small ribosomal subunit protein uS4 from Blochmanniella pennsylvanica (strain BPEN).